The primary structure comprises 375 residues: 4-hydroxy-3-methylbut-2-en-1-yl diphosphate synthase (flavodoxin) (375 aa).

4 residues coordinate [4Fe-4S] cluster: C270, C273, C305, and E312.

The protein belongs to the IspG family. The cofactor is [4Fe-4S] cluster.

It carries out the reaction (2E)-4-hydroxy-3-methylbut-2-enyl diphosphate + oxidized [flavodoxin] + H2O + 2 H(+) = 2-C-methyl-D-erythritol 2,4-cyclic diphosphate + reduced [flavodoxin]. The protein operates within isoprenoid biosynthesis; isopentenyl diphosphate biosynthesis via DXP pathway; isopentenyl diphosphate from 1-deoxy-D-xylulose 5-phosphate: step 5/6. Its function is as follows. Converts 2C-methyl-D-erythritol 2,4-cyclodiphosphate (ME-2,4cPP) into 1-hydroxy-2-methyl-2-(E)-butenyl 4-diphosphate. The protein is 4-hydroxy-3-methylbut-2-en-1-yl diphosphate synthase (flavodoxin) of Shigella flexneri serotype 5b (strain 8401).